Reading from the N-terminus, the 314-residue chain is tRNA(Ile)-lysidine synthase (314 aa).

Residue 37-42 (SGGPDS) coordinates ATP.

Belongs to the tRNA(Ile)-lysidine synthase family.

The protein localises to the cytoplasm. It catalyses the reaction cytidine(34) in tRNA(Ile2) + L-lysine + ATP = lysidine(34) in tRNA(Ile2) + AMP + diphosphate + H(+). Ligates lysine onto the cytidine present at position 34 of the AUA codon-specific tRNA(Ile) that contains the anticodon CAU, in an ATP-dependent manner. Cytidine is converted to lysidine, thus changing the amino acid specificity of the tRNA from methionine to isoleucine. This chain is tRNA(Ile)-lysidine synthase, found in Corynebacterium glutamicum (strain ATCC 13032 / DSM 20300 / JCM 1318 / BCRC 11384 / CCUG 27702 / LMG 3730 / NBRC 12168 / NCIMB 10025 / NRRL B-2784 / 534).